We begin with the raw amino-acid sequence, 55 residues long: Large ribosomal subunit protein bL33 (55 aa).

A compositionally biased stretch (basic and acidic residues) spans 1-10 (MAKGGREKIK). Residues 1 to 27 (MAKGGREKIKLQSTAGTGHFYTTDKNK) are disordered.

It belongs to the bacterial ribosomal protein bL33 family.

The sequence is that of Large ribosomal subunit protein bL33 from Polaromonas naphthalenivorans (strain CJ2).